A 434-amino-acid polypeptide reads, in one-letter code: MAQFDLTRINCQYLDRHLTFPLLEFLCGKEIYNQQELLEYILETVNKTNMIDYTMDTRKRLNLSQEMPDELVQRKAEVLATLKQLQNEVAPIMKATDILKNGESMKDSKTFVNALQKDYNFKVEHLESAYKLAKYLYECGNYQESTSYLYFCLIVMSPNDKNYLNVLWGKLAAEILTLNWNTALEDLTRLRDYIDSANFSTIQALQQRTWLIHWSVLVFFNHPKGRDLIIEMFLYKPLYLNAIQTMCPHIMRYLATAVVINRTRRNALKDLIKVIQQESYTYRDPITEFLECLYVNFDFEGARLKLHECQTVILNDFFIVACLNEFVEDARLMIFETFCRIHQCITISMLADKLNMKPNEAECWIVNLIRNARLNAKIDSKLGHVVMGTQPLSPYQQLVEKIDSLSMRSEHLAGLIERKSKQKNQESIDSWKYY.

One can recognise a PCI domain in the interval 219–392 (FFNHPKGRDL…GHVVMGTQPL (174 aa)).

It belongs to the eIF-3 subunit E family. In terms of assembly, component of the eukaryotic translation initiation factor 3 (eIF-3) complex. The eIF-3 complex interacts with pix. Interacts with mxt.

It is found in the cytoplasm. Functionally, component of the eukaryotic translation initiation factor 3 (eIF-3) complex, which is involved in protein synthesis of a specialized repertoire of mRNAs and, together with other initiation factors, stimulates binding of mRNA and methionyl-tRNAi to the 40S ribosome. The eIF-3 complex specifically targets and initiates translation of a subset of mRNAs involved in cell proliferation. In Drosophila virilis (Fruit fly), this protein is Eukaryotic translation initiation factor 3 subunit E (eIF3-S6).